The following is a 406-amino-acid chain: Elongation factor Tu-A (406 aa).

A tr-type G domain is found at 10-215 (KPHVNVGTIG…AIDEYIPTPV (206 aa)). Residues 19–26 (GHVDHGKT) are G1. 19–26 (GHVDHGKT) is a GTP binding site. Position 26 (threonine 26) interacts with Mg(2+). The tract at residues 61–65 (GITIN) is G2. The interval 82-85 (DCPG) is G3. GTP-binding positions include 82–86 (DCPGH) and 137–140 (NKVD). Positions 137-140 (NKVD) are G4. Residues 175–177 (SAL) form a G5 region. Phosphothreonine is present on threonine 395.

The protein belongs to the TRAFAC class translation factor GTPase superfamily. Classic translation factor GTPase family. EF-Tu/EF-1A subfamily. In terms of assembly, monomer. Binds to the 70S ribosome, contacts tmRNA during trans-translation. In terms of processing, phosphorylated on a threonine.

The protein localises to the cytoplasm. The enzyme catalyses GTP + H2O = GDP + phosphate + H(+). In terms of biological role, GTP hydrolase that promotes the GTP-dependent binding of aminoacyl-tRNA to the A-site of ribosomes during protein biosynthesis. EF-Tu-GDP binds to the acceptor arm of tmRNA by interacting with its acceptor arm, suggesting that GTP hydrolysis by EF-Tu is essential for tmRNA function. Functionally, protects glycyl-tRNA(Gly) from hydrolysis by E.coli D-aminoacyl-tRNA deacylase (dtd). This chain is Elongation factor Tu-A, found in Thermus thermophilus (strain ATCC 27634 / DSM 579 / HB8).